The following is a 1165-amino-acid chain: ATP-dependent helicase/deoxyribonuclease subunit B (1165 aa).

Residues 1–298 (MALRFILGRA…AHLEREFFRR (298 aa)) enclose the UvrD-like helicase ATP-binding domain. An ATP-binding site is contributed by 8–15 (GRAGTGKT). Residues 279–584 (PARFRANPAL…QLALIPPALD (306 aa)) form the UvrD-like helicase C-terminal domain. [4Fe-4S] cluster is bound by residues cysteine 800, cysteine 1119, cysteine 1122, and cysteine 1128.

This sequence belongs to the helicase family. AddB/RexB type 1 subfamily. Heterodimer of AddA and AddB. It depends on Mg(2+) as a cofactor. [4Fe-4S] cluster is required as a cofactor.

Its function is as follows. The heterodimer acts as both an ATP-dependent DNA helicase and an ATP-dependent, dual-direction single-stranded exonuclease. Recognizes the chi site generating a DNA molecule suitable for the initiation of homologous recombination. The AddB subunit has 5' -&gt; 3' nuclease activity but not helicase activity. The chain is ATP-dependent helicase/deoxyribonuclease subunit B from Desulforudis audaxviator (strain MP104C).